The chain runs to 136 residues: Small ribosomal subunit protein uS9 (136 aa).

A disordered region spans residues 115-136 (KVKERKKPGLRKARKARQFSKR). A compositionally biased stretch (basic residues) spans 117–136 (KERKKPGLRKARKARQFSKR).

Belongs to the universal ribosomal protein uS9 family.

This chain is Small ribosomal subunit protein uS9, found in Mycoplasmopsis pulmonis (strain UAB CTIP) (Mycoplasma pulmonis).